Reading from the N-terminus, the 802-residue chain is Chondroitin sulfate synthase 1 (802 aa).

The Cytoplasmic segment spans residues 1–7; it reads MAARGRR. Residues 8–28 traverse the membrane as a helical; Signal-anchor for type II membrane protein segment; sequence AWLSVLLGLVLGFVLASRLVL. The Lumenal segment spans residues 29 to 802; sequence PRASELKRAG…SNNNGSVRTA (774 aa). The tract at residues 34 to 82 is disordered; it reads LKRAGPRRRASPEGCRSGQAAASQAGGARGDARGAQLWPPGSDPDGGPR. 2 stretches are compositionally biased toward low complexity: residues 49-59 and 66-78; these read RSGQAAASQAG and RGAQLWPPGSDPD. 2 N-linked (GlcNAc...) asparagine glycosylation sites follow: asparagine 189 and asparagine 623. A divalent metal cation contacts are provided by aspartate 633 and histidine 747. Asparagine 796 is a glycosylation site (N-linked (GlcNAc...) asparagine).

It belongs to the chondroitin N-acetylgalactosaminyltransferase family. The cofactor is Co(2+). Mn(2+) serves as cofactor. It depends on Cd(2+) as a cofactor. Ubiquitous, with the highest levels in placenta. Detected at low levels in brain, heart, skeletal muscle, colon, thymus, spleen, kidney, liver, adrenal gland, mammary gland, stomach, small intestine, lung and peripheral blood leukocytes.

Its subcellular location is the golgi apparatus. It is found in the golgi stack membrane. The protein localises to the secreted. It catalyses the reaction 3-O-(beta-D-GlcA-(1-&gt;3)-beta-D-GalNAc-(1-&gt;4)-beta-D-GlcA-(1-&gt;3)-beta-D-Gal-(1-&gt;3)-beta-D-Gal-(1-&gt;4)-beta-D-Xyl)-L-seryl-[protein] + UDP-N-acetyl-alpha-D-galactosamine = 3-O-(beta-D-GalNAc-(1-&gt;4)-beta-D-GlcA-(1-&gt;3)-beta-D-GalNAc-(1-&gt;4)-beta-D-GlcA-(1-&gt;3)-beta-D-Gal-(1-&gt;3)-beta-D-Gal-(1-&gt;4)-beta-D-Xyl)-L-seryl-[protein] + UDP + H(+). It carries out the reaction 3-O-{beta-D-GlcA-(1-&gt;3)-[beta-D-GalNAc-(1-&gt;4)-beta-D-GlcA-(1-&gt;3)](n)-beta-D-GalNAc-(1-&gt;4)-beta-D-GlcA-(1-&gt;3)-beta-D-Gal-(1-&gt;3)-beta-D-Gal-(1-&gt;4)-beta-D-Xyl}-L-seryl-[protein] + UDP-N-acetyl-alpha-D-galactosamine = 3-O-{[beta-D-GalNAc-(1-&gt;4)-beta-D-GlcA-(1-&gt;3)](n+1)-beta-D-GalNAc-(1-&gt;4)-beta-D-GlcA-(1-&gt;3)-beta-D-Gal-(1-&gt;3)-beta-D-Gal-(1-&gt;4)-beta-D-Xyl}-L-seryl-[protein] + UDP + H(+). The enzyme catalyses 3-O-(beta-D-GalNAc-(1-&gt;4)-beta-D-GlcA-(1-&gt;3)-beta-D-Gal-(1-&gt;3)-beta-D-Gal-(1-&gt;4)-beta-D-Xyl)-L-seryl-[protein] + UDP-alpha-D-glucuronate = 3-O-(beta-D-GlcA-(1-&gt;3)-beta-D-GalNAc-(1-&gt;4)-beta-D-GlcA-(1-&gt;3)-beta-D-Gal-(1-&gt;3)-beta-D-Gal-(1-&gt;4)-beta-D-Xyl)-L-seryl-[protein] + UDP + H(+). The catalysed reaction is 3-O-{[beta-D-GalNAc-(1-&gt;4)-beta-D-GlcA-(1-&gt;3)](n)-beta-D-GalNAc-(1-&gt;4)-beta-D-GlcA-(1-&gt;3)-beta-D-Gal-(1-&gt;3)-beta-D-Gal-(1-&gt;4)-beta-D-Xyl}-L-seryl-[protein] + UDP-alpha-D-glucuronate = 3-O-{beta-D-GlcA-(1-&gt;3)-[beta-D-GalNAc-(1-&gt;4)-beta-D-GlcA-(1-&gt;3)](n)-beta-D-GalNAc-(1-&gt;4)-beta-D-GlcA-(1-&gt;3)-beta-D-Gal-(1-&gt;3)-beta-D-Gal-(1-&gt;4)-beta-D-Xyl}-L-seryl-[protein] + UDP + H(+). In terms of biological role, has both beta-1,3-glucuronic acid and beta-1,4-N-acetylgalactosamine transferase activity. Transfers glucuronic acid (GlcUA) from UDP-GlcUA and N-acetylgalactosamine (GalNAc) from UDP-GalNAc to the non-reducing end of the elongating chondroitin polymer. Involved in the negative control of osteogenesis likely through the modulation of NOTCH signaling. This chain is Chondroitin sulfate synthase 1, found in Homo sapiens (Human).